Reading from the N-terminus, the 490-residue chain is GTPase Der (490 aa).

EngA-type G domains are found at residues 3–166 (PVVA…MDDV) and 203–376 (IKLA…DSST). GTP-binding positions include 9–16 (GRPNVGKS), 56–60 (DTGGI), 118–121 (NKTD), 209–216 (GRPNVGKS), 256–260 (DTAGV), and 321–324 (NKWD). The region spanning 377 to 461 (RRVSTAMLTR…PIRIQFKEGE (85 aa)) is the KH-like domain.

Belongs to the TRAFAC class TrmE-Era-EngA-EngB-Septin-like GTPase superfamily. EngA (Der) GTPase family. In terms of assembly, associates with the 50S ribosomal subunit.

Functionally, GTPase that plays an essential role in the late steps of ribosome biogenesis. This chain is GTPase Der, found in Salmonella newport (strain SL254).